Consider the following 333-residue polypeptide: MFARDIGIDLGTANVLIHVKGKGIVLNEPSVVAIDRNTGKVLAVGEEARSMVGRTPGNIVAIRPLKDGVIADFEITEAMLKYFINKLDVKSFFSKPRILICCPTNITSVEQKAIREAAERSGGKTVFLEEEPKVAAVGAGMEIFQPSGNMVVDIGGGTTDIAVLSMGDIVTSSSIKMAGDKFDMEILNYIKRKYKLLIGERTSEDIKIKVGTVFPGARSEELEIRGRDMVTGLPRTITVCSEEITEALKENAAVIVQAAKGVLERTPPELSADIIDRGVILTGGGALLHGIDMLLAEELKVPVLIAENPMHCVAVGTGIMLENIDRLPKRALR.

ATP contacts are provided by residues 12-14, 156-158, 204-207, and 284-287; these read TAN, GGT, EDIK, and GGAL.

Belongs to the FtsA/MreB family. In terms of assembly, forms polymers.

The protein localises to the cytoplasm. Its function is as follows. Forms membrane-associated dynamic filaments that are essential for cell shape determination. Acts by regulating cell wall synthesis and cell elongation, and thus cell shape. A feedback loop between cell geometry and Mbl localization may maintain elongated cell shape by targeting cell wall growth to regions of negative cell wall curvature. The chain is Cell shape-determining protein Mbl from Bacillus cereus (strain ATCC 10987 / NRS 248).